Reading from the N-terminus, the 300-residue chain is Homoserine kinase (300 aa).

86–96 is an ATP binding site; it reads PVARGLGSSAT.

This sequence belongs to the GHMP kinase family. Homoserine kinase subfamily.

The protein resides in the cytoplasm. The enzyme catalyses L-homoserine + ATP = O-phospho-L-homoserine + ADP + H(+). The protein operates within amino-acid biosynthesis; L-threonine biosynthesis; L-threonine from L-aspartate: step 4/5. In terms of biological role, catalyzes the ATP-dependent phosphorylation of L-homoserine to L-homoserine phosphate. The protein is Homoserine kinase of Persephonella marina (strain DSM 14350 / EX-H1).